Here is a 596-residue protein sequence, read N- to C-terminus: Ulvan-active sulfatase (596 aa).

The signal sequence occupies residues M1–C27. Positions 58, 59, 97, 306, and 307 each coordinate Ca(2+). The active-site Nucleophile is the C97. C97 bears the 3-oxoalanine (Cys) mark.

This sequence belongs to the sulfatase family. The cofactor is Ca(2+). Post-translationally, the conversion to 3-oxoalanine (also known as C-formylglycine, FGly), of a serine or cysteine residue in prokaryotes and of a cysteine residue in eukaryotes, is critical for catalytic activity.

The protein resides in the periplasm. Functionally, sulfatase involved in ulvan degradation. Ulvan is the main polysaccharide component of the Ulvales (green seaweed) cell wall. It is composed of disaccharide building blocks comprising 3-sulfated rhamnose (Rha3S) linked to D-glucuronic acid (GlcA), L-iduronic acid (IduA), or D-xylose (Xyl). The sulfatase desulfates Xyl2S-Rha3S, product of the degradation of ulvan by endo-acting alpha-1,4-L-rhamnosidase, to Xyl-Rha3S. The polypeptide is Ulvan-active sulfatase (Formosa agariphila (strain DSM 15362 / KCTC 12365 / LMG 23005 / KMM 3901 / M-2Alg 35-1)).